Consider the following 113-residue polypeptide: Large ribosomal subunit protein bL19 (113 aa).

The protein belongs to the bacterial ribosomal protein bL19 family.

In terms of biological role, this protein is located at the 30S-50S ribosomal subunit interface and may play a role in the structure and function of the aminoacyl-tRNA binding site. This chain is Large ribosomal subunit protein bL19, found in Mycobacterium sp. (strain JLS).